The following is a 254-amino-acid chain: K88 minor fimbrial subunit FaeI (254 aa).

An N-terminal signal peptide occupies residues 1 to 20 (MKKVTLFLFVVSLLPSTVLA).

This sequence belongs to the fimbrial K88 protein family.

The protein resides in the fimbrium. In terms of biological role, K88 minor fimbrial subunit, plays an essential role in the biogenesis of the K88 fimbriae. Fimbriae (also called pili), are polar filaments radiating from the surface of the bacterium to a length of 0.5-1.5 micrometers and numbering 100-300 per cell. They enable bacteria to colonize the epithelium of specific host organs. The chain is K88 minor fimbrial subunit FaeI (faeI) from Escherichia coli.